Reading from the N-terminus, the 138-residue chain is Small ribosomal subunit protein bS6 (138 aa).

The tract at residues Val-94–Glu-138 is disordered. A compositionally biased stretch (basic and acidic residues) spans Thr-106–Glu-138.

Belongs to the bacterial ribosomal protein bS6 family.

Functionally, binds together with bS18 to 16S ribosomal RNA. This Prochlorococcus marinus (strain NATL1A) protein is Small ribosomal subunit protein bS6.